A 208-amino-acid chain; its full sequence is Ribosomal RNA large subunit methyltransferase E (208 aa).

Residues Gly63, Trp65, Asp83, Asp99, and Asp124 each coordinate S-adenosyl-L-methionine. The active-site Proton acceptor is Lys164.

It belongs to the class I-like SAM-binding methyltransferase superfamily. RNA methyltransferase RlmE family.

The protein resides in the cytoplasm. It carries out the reaction uridine(2552) in 23S rRNA + S-adenosyl-L-methionine = 2'-O-methyluridine(2552) in 23S rRNA + S-adenosyl-L-homocysteine + H(+). In terms of biological role, specifically methylates the uridine in position 2552 of 23S rRNA at the 2'-O position of the ribose in the fully assembled 50S ribosomal subunit. The protein is Ribosomal RNA large subunit methyltransferase E of Salmonella choleraesuis (strain SC-B67).